Here is a 140-residue protein sequence, read N- to C-terminus: Nucleoside diphosphate kinase (140 aa).

K11, F59, R87, T93, R104, and N114 together coordinate ATP. H117 (pros-phosphohistidine intermediate) is an active-site residue.

This sequence belongs to the NDK family. In terms of assembly, homotetramer. It depends on Mg(2+) as a cofactor.

The protein resides in the cytoplasm. The enzyme catalyses a 2'-deoxyribonucleoside 5'-diphosphate + ATP = a 2'-deoxyribonucleoside 5'-triphosphate + ADP. It carries out the reaction a ribonucleoside 5'-diphosphate + ATP = a ribonucleoside 5'-triphosphate + ADP. In terms of biological role, major role in the synthesis of nucleoside triphosphates other than ATP. The ATP gamma phosphate is transferred to the NDP beta phosphate via a ping-pong mechanism, using a phosphorylated active-site intermediate. The sequence is that of Nucleoside diphosphate kinase from Rickettsia conorii (strain ATCC VR-613 / Malish 7).